Here is a 694-residue protein sequence, read N- to C-terminus: Methionine--tRNA ligase (694 aa).

Positions 12–22 (PYANGPLHLGH) match the 'HIGH' region motif. Zn(2+) contacts are provided by cysteine 143, cysteine 146, cysteine 156, and cysteine 159. The 'KMSKS' region motif lies at 330–334 (KMSKS). Lysine 333 lines the ATP pocket. Residues 552–577 (APAAPAATTKPAPSKADAAPAAVANP) form a disordered region. The region spanning 591–694 (DFAKLDLRIG…AGAQPGMPVR (104 aa)) is the tRNA-binding domain.

The protein belongs to the class-I aminoacyl-tRNA synthetase family. MetG type 1 subfamily. As to quaternary structure, homodimer. Zn(2+) is required as a cofactor.

It localises to the cytoplasm. The enzyme catalyses tRNA(Met) + L-methionine + ATP = L-methionyl-tRNA(Met) + AMP + diphosphate. Its function is as follows. Is required not only for elongation of protein synthesis but also for the initiation of all mRNA translation through initiator tRNA(fMet) aminoacylation. The sequence is that of Methionine--tRNA ligase from Xanthomonas campestris pv. campestris (strain B100).